Reading from the N-terminus, the 285-residue chain is Bifunctional protein FolD (285 aa).

NADP(+) contacts are provided by residues 166 to 168 and Ile232; that span reads GAS.

The protein belongs to the tetrahydrofolate dehydrogenase/cyclohydrolase family. In terms of assembly, homodimer.

The catalysed reaction is (6R)-5,10-methylene-5,6,7,8-tetrahydrofolate + NADP(+) = (6R)-5,10-methenyltetrahydrofolate + NADPH. It carries out the reaction (6R)-5,10-methenyltetrahydrofolate + H2O = (6R)-10-formyltetrahydrofolate + H(+). It participates in one-carbon metabolism; tetrahydrofolate interconversion. Functionally, catalyzes the oxidation of 5,10-methylenetetrahydrofolate to 5,10-methenyltetrahydrofolate and then the hydrolysis of 5,10-methenyltetrahydrofolate to 10-formyltetrahydrofolate. This Psychromonas ingrahamii (strain DSM 17664 / CCUG 51855 / 37) protein is Bifunctional protein FolD.